Consider the following 232-residue polypeptide: MPILRNDWNDVIGGEFQKTYYLELREFLKREYKEQTVYPHMNDLFNAFHYTPFEQVKVVILGQDPYHGPNQAHGLSFSVKPEVAVPPSLKNMYKELQDDLGVTPVDHGYLQPWADQGVLLLNTVLSVRKRQPGSHKGKGWELFTNEVIHALNKREEPVAFVLWGRHAQAKKEAIDATRHLIIESAHPSPFSANRGFFGSRPFSKINHWLQEQGKAPVDWQLPMKAELYSYGK.

Asp-64 (proton acceptor) is an active-site residue.

The protein belongs to the uracil-DNA glycosylase (UDG) superfamily. UNG family.

It is found in the cytoplasm. It catalyses the reaction Hydrolyzes single-stranded DNA or mismatched double-stranded DNA and polynucleotides, releasing free uracil.. In terms of biological role, excises uracil residues from the DNA which can arise as a result of misincorporation of dUMP residues by DNA polymerase or due to deamination of cytosine. This is Uracil-DNA glycosylase from Shouchella clausii (strain KSM-K16) (Alkalihalobacillus clausii).